The following is a 176-amino-acid chain: Caltractin (176 aa).

The interval 1 to 27 (MNRAAIAAGKPSGSISTGKPRRKTRAE) is disordered. EF-hand domains follow at residues 31-66 (EMKH…LGFD), 67-102 (VKKE…KISN), 104-139 (DPTE…LSEN), and 140-175 (ISDE…TSAF). The Ca(2+) site is built by D44, D46, S48, R50, and E55. 5 residues coordinate Ca(2+): D153, D155, D157, E159, and D164.

Belongs to the centrin family. Monomer.

The protein resides in the cytoplasm. The protein localises to the cytoskeleton. It localises to the microtubule organizing center. It is found in the centrosome. In terms of biological role, plays a fundamental role in microtubule-organizing center structure and function. This Giardia intestinalis (Giardia lamblia) protein is Caltractin (CAL).